Reading from the N-terminus, the 466-residue chain is NADH-quinone oxidoreductase subunit N (466 aa).

The next 14 membrane-spanning stretches (helical) occupy residues 9–29, 33–53, 68–88, 100–120, 122–142, 157–177, 190–210, 232–252, 263–283, 289–309, 314–334, 359–379, 394–416, and 438–458; these read LIPL…GAIV, CGTV…MLAP, PFTR…LLLA, EEYP…ASAA, FLTL…LVAY, LLMG…LYGA, SAAG…GLAF, VVAF…LLIL, APLW…ALLQ, MLAY…LSGG, AAAF…GALA, GVVL…VGFV, APLA…RVVV, and LSLG…GPLF.

It belongs to the complex I subunit 2 family. In terms of assembly, NDH-1 is composed of 14 different subunits. Subunits NuoA, H, J, K, L, M, N constitute the membrane sector of the complex.

The protein resides in the cell inner membrane. It carries out the reaction a quinone + NADH + 5 H(+)(in) = a quinol + NAD(+) + 4 H(+)(out). Its function is as follows. NDH-1 shuttles electrons from NADH, via FMN and iron-sulfur (Fe-S) centers, to quinones in the respiratory chain. The immediate electron acceptor for the enzyme in this species is believed to be ubiquinone. Couples the redox reaction to proton translocation (for every two electrons transferred, four hydrogen ions are translocated across the cytoplasmic membrane), and thus conserves the redox energy in a proton gradient. The chain is NADH-quinone oxidoreductase subunit N from Geobacter metallireducens (strain ATCC 53774 / DSM 7210 / GS-15).